Consider the following 52-residue polypeptide: Gene 5.9 protein (52 aa).

The chain is Gene 5.9 protein (5.9) from Enterobacteria phage T3 (Bacteriophage T3).